The chain runs to 709 residues: Heme/hemopexin utilization protein C (709 aa).

The N-terminal stretch at 1-21 (MRFSKLSLAITTTLVTANALA) is a signal peptide. Residues 36 to 147 (DPSRFTYTPQ…LGGVVAMRTP (112 aa)) form the TBDR plug domain. In terms of domain architecture, TBDR beta-barrel spans 158-709 (KFGVKIRQGY…NAKISAVYSF (552 aa)). Residues 692-709 (SLMEGTGRNAKISAVYSF) carry the TonB C-terminal box motif.

This sequence belongs to the TonB-dependent receptor family.

It is found in the cell outer membrane. Required for utilization of free heme at low concentrations. This is Heme/hemopexin utilization protein C (hxuC) from Haemophilus influenzae (strain 86-028NP).